The sequence spans 201 residues: 3-isopropylmalate dehydratase small subunit (201 aa).

This sequence belongs to the LeuD family. LeuD type 1 subfamily. In terms of assembly, heterodimer of LeuC and LeuD.

It carries out the reaction (2R,3S)-3-isopropylmalate = (2S)-2-isopropylmalate. It participates in amino-acid biosynthesis; L-leucine biosynthesis; L-leucine from 3-methyl-2-oxobutanoate: step 2/4. In terms of biological role, catalyzes the isomerization between 2-isopropylmalate and 3-isopropylmalate, via the formation of 2-isopropylmaleate. This Salmonella arizonae (strain ATCC BAA-731 / CDC346-86 / RSK2980) protein is 3-isopropylmalate dehydratase small subunit.